Reading from the N-terminus, the 265-residue chain is Mlc titration factor A (265 aa).

His-111, His-148, His-152, and Glu-211 together coordinate Zn(2+).

It belongs to the MtfA family. As to quaternary structure, interacts with Mlc. Requires Zn(2+) as cofactor.

Its subcellular location is the cytoplasm. Involved in the modulation of the activity of the glucose-phosphotransferase system (glucose-PTS). Interacts with the transcriptional repressor Mlc, preventing its interaction with DNA and leading to the modulation of expression of genes regulated by Mlc, including ptsG, which encodes the PTS system glucose-specific EIICB component. In terms of biological role, shows zinc-dependent metallopeptidase activity. The protein is Mlc titration factor A of Escherichia coli (strain 55989 / EAEC).